Consider the following 325-residue polypeptide: UPF0285 protein MmarC6_0247 (325 aa).

This sequence belongs to the UPF0285 family.

The chain is UPF0285 protein MmarC6_0247 from Methanococcus maripaludis (strain C6 / ATCC BAA-1332).